Consider the following 379-residue polypeptide: ATP phosphoribosyltransferase regulatory subunit (379 aa).

Belongs to the class-II aminoacyl-tRNA synthetase family. HisZ subfamily. In terms of assembly, heteromultimer composed of HisG and HisZ subunits.

Its subcellular location is the cytoplasm. It functions in the pathway amino-acid biosynthesis; L-histidine biosynthesis; L-histidine from 5-phospho-alpha-D-ribose 1-diphosphate: step 1/9. Required for the first step of histidine biosynthesis. May allow the feedback regulation of ATP phosphoribosyltransferase activity by histidine. This Paramagnetospirillum magneticum (strain ATCC 700264 / AMB-1) (Magnetospirillum magneticum) protein is ATP phosphoribosyltransferase regulatory subunit.